The sequence spans 341 residues: S-adenosylmethionine:tRNA ribosyltransferase-isomerase (341 aa).

It belongs to the QueA family. In terms of assembly, monomer.

The protein resides in the cytoplasm. It catalyses the reaction 7-aminomethyl-7-carbaguanosine(34) in tRNA + S-adenosyl-L-methionine = epoxyqueuosine(34) in tRNA + adenine + L-methionine + 2 H(+). It functions in the pathway tRNA modification; tRNA-queuosine biosynthesis. Functionally, transfers and isomerizes the ribose moiety from AdoMet to the 7-aminomethyl group of 7-deazaguanine (preQ1-tRNA) to give epoxyqueuosine (oQ-tRNA). This is S-adenosylmethionine:tRNA ribosyltransferase-isomerase from Staphylococcus epidermidis (strain ATCC 35984 / DSM 28319 / BCRC 17069 / CCUG 31568 / BM 3577 / RP62A).